A 53-amino-acid chain; its full sequence is MAIKKSIRLECGECKEINYLTFKNAKKHPEKLELNKYCKRCRSAKPHKETKKK.

Belongs to the bacterial ribosomal protein bL33 family.

This Malacoplasma penetrans (strain HF-2) (Mycoplasma penetrans) protein is Large ribosomal subunit protein bL33.